The primary structure comprises 237 residues: Aliphatic sulfonates import ATP-binding protein SsuB 1 (237 aa).

The ABC transporter domain maps to 5-221; that stretch reads LMDIRVEHKA…PRDRRDPLLA (217 aa). 38-45 is an ATP binding site; it reads GPSGCGKS.

The protein belongs to the ABC transporter superfamily. Aliphatic sulfonates importer (TC 3.A.1.17.2) family. As to quaternary structure, the complex is composed of two ATP-binding proteins (SsuB), two transmembrane proteins (SsuC) and a solute-binding protein (SsuA).

The protein resides in the cell inner membrane. It catalyses the reaction ATP + H2O + aliphatic sulfonate-[sulfonate-binding protein]Side 1 = ADP + phosphate + aliphatic sulfonateSide 2 + [sulfonate-binding protein]Side 1.. In terms of biological role, part of the ABC transporter complex SsuABC involved in aliphatic sulfonates import. Responsible for energy coupling to the transport system. The polypeptide is Aliphatic sulfonates import ATP-binding protein SsuB 1 (Pseudomonas syringae pv. syringae (strain B728a)).